The chain runs to 249 residues: Syntaxin-10 (249 aa).

Residue S2 is modified to N-acetylserine. Topologically, residues 2–228 (SLEDPFFVVR…VSHMTSDRRQ (227 aa)) are cytoplasmic. A coiled-coil region spans residues 41–69 (EELDWTTNELRNGLRSIEWDLEDLEETIG). At S108 the chain carries Phosphoserine. T110 bears the Phosphothreonine mark. 3 positions are modified to phosphoserine: S134, S140, and S143. Positions 157–219 (QLIMDEQDQQ…DGVLRKLAKV (63 aa)) constitute a t-SNARE coiled-coil homology domain. The chain crosses the membrane as a helical; Anchor for type IV membrane protein span at residues 229–249 (WCAIAVLVGVLLLVLILLFSL).

Belongs to the syntaxin family. Interacts with VPS52. Expressed at high levels in heart, skeletal muscle and pancreas.

It is found in the golgi apparatus membrane. Its function is as follows. SNARE involved in vesicular transport from the late endosomes to the trans-Golgi network. This is Syntaxin-10 (STX10) from Homo sapiens (Human).